The chain runs to 286 residues: Protein HEAT-STRESS-ASSOCIATED 32 (286 aa).

The protein belongs to the phosphosulfolactate synthase family.

Functionally, transactivator required, together with HSP101, for long-term acquired thermotolerance (LAT) maintenance, probably by regulating heat-inducible genes expression, thus being a cellular component of thermomemory. The sequence is that of Protein HEAT-STRESS-ASSOCIATED 32 from Arabidopsis thaliana (Mouse-ear cress).